The primary structure comprises 1104 residues: Protein transport protein SEC31 homolog B (1104 aa).

WD repeat units follow at residues 5 to 45, 62 to 109, 120 to 160, 170 to 210, 214 to 257, 261 to 301, and 304 to 344; these read KGVG…EIFK, PSSE…GSQP, VHKG…EPSH, ATQG…PIIN, SVRR…SPVR, GHQR…IVAE, and AGNN…RYGV. Thr526 is subject to Phosphothreonine. The disordered stretch occupies residues 527–562; that stretch reads PVSTSAKDFMPSDTDFSTKGEETQEMQEEEEESSDP. Over residues 549-560 the composition is skewed to acidic residues; it reads TQEMQEEEEESS. The stretch at 662 to 707 is one WD 8 repeat; that stretch reads TLCDALASKLMAAGNTLAAVLCYICAGNVDRTVEIWSRSLANERDG. 4 disordered regions span residues 782-811, 851-874, 892-931, and 952-994; these read LSAE…PTQA, HQAQ…PSMR, QQPT…QYPN, and TPGV…SNVP. Composition is skewed to polar residues over residues 786 to 811, 863 to 874, and 892 to 908; these read PETN…PTQA, PAPTSNAQPSMR, and QQPT…SNNA. A compositionally biased stretch (low complexity) spans 959-977; it reads SVQPASPPTQQAAAQAAPA.

The protein belongs to the WD repeat SEC31 family. In terms of assembly, interacts with SEC13A and SEC13B.

It is found in the golgi apparatus. The protein resides in the endoplasmic reticulum. Required for protein transport from the endoplasmic reticulum to the Golgi apparatus. The polypeptide is Protein transport protein SEC31 homolog B (Arabidopsis thaliana (Mouse-ear cress)).